Consider the following 235-residue polypeptide: Phosphatidylserine decarboxylase proenzyme (235 aa).

Catalysis depends on Ser204, which acts as the Schiff-base intermediate with substrate; via pyruvic acid. The residue at position 204 (Ser204) is a Pyruvic acid (Ser); by autocatalysis.

The protein belongs to the phosphatidylserine decarboxylase family. PSD-A subfamily. Heterodimer of a large membrane-associated beta subunit and a small pyruvoyl-containing alpha subunit. It depends on pyruvate as a cofactor. In terms of processing, is synthesized initially as an inactive proenzyme. Formation of the active enzyme involves a self-maturation process in which the active site pyruvoyl group is generated from an internal serine residue via an autocatalytic post-translational modification. Two non-identical subunits are generated from the proenzyme in this reaction, and the pyruvate is formed at the N-terminus of the alpha chain, which is derived from the carboxyl end of the proenzyme. The post-translation cleavage follows an unusual pathway, termed non-hydrolytic serinolysis, in which the side chain hydroxyl group of the serine supplies its oxygen atom to form the C-terminus of the beta chain, while the remainder of the serine residue undergoes an oxidative deamination to produce ammonia and the pyruvoyl prosthetic group on the alpha chain.

Its subcellular location is the cell membrane. It carries out the reaction a 1,2-diacyl-sn-glycero-3-phospho-L-serine + H(+) = a 1,2-diacyl-sn-glycero-3-phosphoethanolamine + CO2. Its pathway is phospholipid metabolism; phosphatidylethanolamine biosynthesis; phosphatidylethanolamine from CDP-diacylglycerol: step 2/2. Its function is as follows. Catalyzes the formation of phosphatidylethanolamine (PtdEtn) from phosphatidylserine (PtdSer). The polypeptide is Phosphatidylserine decarboxylase proenzyme (Mycobacterium sp. (strain KMS)).